The primary structure comprises 502 residues: ATP synthase subunit alpha (502 aa).

Gly170–Thr177 provides a ligand contact to ATP.

This sequence belongs to the ATPase alpha/beta chains family. In terms of assembly, F-type ATPases have 2 components, CF(1) - the catalytic core - and CF(0) - the membrane proton channel. CF(1) has five subunits: alpha(3), beta(3), gamma(1), delta(1), epsilon(1). CF(0) has four main subunits: a, b, b' and c.

It is found in the cellular thylakoid membrane. The enzyme catalyses ATP + H2O + 4 H(+)(in) = ADP + phosphate + 5 H(+)(out). In terms of biological role, produces ATP from ADP in the presence of a proton gradient across the membrane. The alpha chain is a regulatory subunit. This is ATP synthase subunit alpha from Microcystis aeruginosa (strain NIES-843 / IAM M-2473).